The sequence spans 162 residues: Peptidyl-prolyl cis-trans isomerase-like 1 (162 aa).

One can recognise a PPIase cyclophilin-type domain in the interval 1-155 (MATDVTFDTS…DEVKILRAKV (155 aa)).

This sequence belongs to the cyclophilin-type PPIase family. PPIL1 subfamily.

It catalyses the reaction [protein]-peptidylproline (omega=180) = [protein]-peptidylproline (omega=0). Its function is as follows. PPIases accelerate the folding of proteins. It catalyzes the cis-trans isomerization of proline imidic peptide bonds in oligopeptides. In Emericella nidulans (strain FGSC A4 / ATCC 38163 / CBS 112.46 / NRRL 194 / M139) (Aspergillus nidulans), this protein is Peptidyl-prolyl cis-trans isomerase-like 1 (cyp1).